The primary structure comprises 488 residues: Mannosylglycerate hydrolase MGH2 (488 aa).

Substrate contacts are provided by residues Tyr-94, 98 to 101 (WNWD), Tyr-146, Gln-167, and Gly-227. The active-site Proton donor is the Asp-229. Residues Arg-262 and 415 to 416 (YW) each bind substrate. Glu-459 (proton acceptor) is an active-site residue.

The protein belongs to the glycosyl hydrolase 63 family.

The catalysed reaction is (2R)-2-O-(alpha-D-mannosyl)-glycerate + H2O = D-mannose + (R)-glycerate. The enzyme catalyses (2R)-2-O-(alpha-D-glucopyranosyl)-glycerate + H2O = (R)-glycerate + D-glucose. With respect to regulation, activity is not dependent on divalent cations, but it is enhanced by Mn(2+). Its function is as follows. Catalyzes the hydrolysis of alpha-D-mannosyl-glycerate (MG) to D-glycerate and D-mannose. Can also hydrolyze alpha-D-glucopyranosyl-glycerate (GG)with lower efficiency. The protein is Mannosylglycerate hydrolase MGH2 of Selaginella moellendorffii (Spikemoss).